Here is a 513-residue protein sequence, read N- to C-terminus: GMP synthase [glutamine-hydrolyzing] (513 aa).

Residues 7-197 form the Glutamine amidotransferase type-1 domain; it reads TILVLDFGGQ…LFGVCGCTGE (191 aa). Catalysis depends on Cys-84, which acts as the Nucleophile. Active-site residues include His-171 and Glu-173. The GMPS ATP-PPase domain maps to 198–387; that stretch reads WTMENFIEEQ…LGLPEDIVWR (190 aa). ATP is bound at residue 225-231; it reads SGGVDSS.

Homodimer.

The enzyme catalyses XMP + L-glutamine + ATP + H2O = GMP + L-glutamate + AMP + diphosphate + 2 H(+). The protein operates within purine metabolism; GMP biosynthesis; GMP from XMP (L-Gln route): step 1/1. Functionally, catalyzes the synthesis of GMP from XMP. The chain is GMP synthase [glutamine-hydrolyzing] from Heliobacterium modesticaldum (strain ATCC 51547 / Ice1).